Here is a 594-residue protein sequence, read N- to C-terminus: Gamma-terpinene synthase, chloroplastic (594 aa).

A chloroplast-targeting transit peptide spans 1–44; the sequence is MATLSMQVSILSKEVKNVNNIGMRASKPMVARRVSTTRLRPICS. Mn(2+) is bound by residues Asp347 and Asp351. A DDXXD motif motif is present at residues 347-351; that stretch reads DDVYD. Homodimerization stretches follow at residues 353 to 359 and 425 to 462; these read YGTLDEL and EAKWYYAGYTPTLAEYLENAKVSISSPTIISQVYFTLP. Positions 491 and 499 each coordinate Mn(2+).

It belongs to the terpene synthase family. In terms of assembly, homodimer. The cofactor is Mn(2+). Mg(2+) is required as a cofactor. In terms of tissue distribution, expressed in peltate glandular trichomes.

Its subcellular location is the plastid. It localises to the chloroplast. It carries out the reaction (2E)-geranyl diphosphate = gamma-terpinene + diphosphate. It catalyses the reaction (2E)-geranyl diphosphate = alpha-terpinene + diphosphate. It participates in secondary metabolite biosynthesis; terpenoid biosynthesis. Involved in the biosynthesis of phenolic monoterpenes natural products thymol and carvacrol which have a broad range of biological activities acting as antimicrobial compounds, insecticides, antioxidants and pharmaceutical agents. Monoterpene synthase which catalyzes the conversion of geranyl diphosphate (GPP) to gamma-terpinene and the minor products alpha-thujene, alpha-terpinene, myrcene, sabinene, (+)-R-limonene, alpha-pinene and alpha-phellandrene. The sequence is that of Gamma-terpinene synthase, chloroplastic from Origanum vulgare (Wild marjoram).